The sequence spans 89 residues: Small ribosomal subunit protein uS15 (89 aa).

It belongs to the universal ribosomal protein uS15 family. As to quaternary structure, part of the 30S ribosomal subunit. Forms a bridge to the 50S subunit in the 70S ribosome, contacting the 23S rRNA.

One of the primary rRNA binding proteins, it binds directly to 16S rRNA where it helps nucleate assembly of the platform of the 30S subunit by binding and bridging several RNA helices of the 16S rRNA. Its function is as follows. Forms an intersubunit bridge (bridge B4) with the 23S rRNA of the 50S subunit in the ribosome. The sequence is that of Small ribosomal subunit protein uS15 from Crocosphaera subtropica (strain ATCC 51142 / BH68) (Cyanothece sp. (strain ATCC 51142)).